The sequence spans 215 residues: Probable nicotinate-nucleotide adenylyltransferase (215 aa).

This sequence belongs to the NadD family.

The enzyme catalyses nicotinate beta-D-ribonucleotide + ATP + H(+) = deamido-NAD(+) + diphosphate. It functions in the pathway cofactor biosynthesis; NAD(+) biosynthesis; deamido-NAD(+) from nicotinate D-ribonucleotide: step 1/1. Catalyzes the reversible adenylation of nicotinate mononucleotide (NaMN) to nicotinic acid adenine dinucleotide (NaAD). The protein is Probable nicotinate-nucleotide adenylyltransferase of Coxiella burnetii (strain Dugway 5J108-111).